The chain runs to 164 residues: Crossover junction endodeoxyribonuclease RuvC (164 aa).

Active-site residues include D7, E67, and D140. Positions 7, 67, and 140 each coordinate Mg(2+).

It belongs to the RuvC family. As to quaternary structure, homodimer which binds Holliday junction (HJ) DNA. The HJ becomes 2-fold symmetrical on binding to RuvC with unstacked arms; it has a different conformation from HJ DNA in complex with RuvA. In the full resolvosome a probable DNA-RuvA(4)-RuvB(12)-RuvC(2) complex forms which resolves the HJ. Requires Mg(2+) as cofactor.

Its subcellular location is the cytoplasm. The catalysed reaction is Endonucleolytic cleavage at a junction such as a reciprocal single-stranded crossover between two homologous DNA duplexes (Holliday junction).. Functionally, the RuvA-RuvB-RuvC complex processes Holliday junction (HJ) DNA during genetic recombination and DNA repair. Endonuclease that resolves HJ intermediates. Cleaves cruciform DNA by making single-stranded nicks across the HJ at symmetrical positions within the homologous arms, yielding a 5'-phosphate and a 3'-hydroxyl group; requires a central core of homology in the junction. The consensus cleavage sequence is 5'-(A/T)TT(C/G)-3'. Cleavage occurs on the 3'-side of the TT dinucleotide at the point of strand exchange. HJ branch migration catalyzed by RuvA-RuvB allows RuvC to scan DNA until it finds its consensus sequence, where it cleaves and resolves the cruciform DNA. The polypeptide is Crossover junction endodeoxyribonuclease RuvC (Alkaliphilus oremlandii (strain OhILAs) (Clostridium oremlandii (strain OhILAs))).